Here is a 288-residue protein sequence, read N- to C-terminus: Acetyl-coenzyme A carboxylase carboxyl transferase subunit beta (288 aa).

A CoA carboxyltransferase N-terminal domain is found at 34–288 (LFAKCPACKH…HLVAFHGGGQ (255 aa)). Residues cysteine 38, cysteine 41, cysteine 56, and cysteine 59 each coordinate Zn(2+). The segment at 38–59 (CPACKHMIYKKDLGLAKICPTC) adopts a C4-type zinc-finger fold.

It belongs to the AccD/PCCB family. In terms of assembly, acetyl-CoA carboxylase is a heterohexamer composed of biotin carboxyl carrier protein (AccB), biotin carboxylase (AccC) and two subunits each of ACCase subunit alpha (AccA) and ACCase subunit beta (AccD). It depends on Zn(2+) as a cofactor.

The protein localises to the cytoplasm. It catalyses the reaction N(6)-carboxybiotinyl-L-lysyl-[protein] + acetyl-CoA = N(6)-biotinyl-L-lysyl-[protein] + malonyl-CoA. It participates in lipid metabolism; malonyl-CoA biosynthesis; malonyl-CoA from acetyl-CoA: step 1/1. In terms of biological role, component of the acetyl coenzyme A carboxylase (ACC) complex. Biotin carboxylase (BC) catalyzes the carboxylation of biotin on its carrier protein (BCCP) and then the CO(2) group is transferred by the transcarboxylase to acetyl-CoA to form malonyl-CoA. The polypeptide is Acetyl-coenzyme A carboxylase carboxyl transferase subunit beta (Streptococcus pyogenes serotype M4 (strain MGAS10750)).